The chain runs to 194 residues: Putative 3-methyladenine DNA glycosylase (194 aa).

The protein belongs to the DNA glycosylase MPG family.

This chain is Putative 3-methyladenine DNA glycosylase, found in Myxococcus xanthus (strain DK1622).